The chain runs to 961 residues: Rho guanine nucleotide exchange factor 2 (961 aa).

The segment at 12–59 adopts a Phorbol-ester/DAG-type zinc-finger fold; that stretch reads GHLFTTISVSGMTMCYACNKSITAKEALICPTCNVTIHNRCKDTLANC. S82, S95, S102, S106, S110, S124, S136, S145, S147, and S150 each carry phosphoserine. The tract at residues 104 to 134 is interaction with DYNLT1; it reads RQSLLGSRRGRSPLSLAKSVSTTNIAGHFND. In terms of domain architecture, DH spans 209-406; it reads KQQDVIYELI…KELLSNVDQD (198 aa). Residue K327 is modified to N6-acetyllysine. Positions 446–545 constitute a PH domain; that stretch reads KLIHDGCLLW…WIRVIQQSVR (100 aa). Positions 561–588 form a coiled coil; sequence EAYLRRIKMELQQKDRALVELLQEKVGL. Phosphoserine is present on residues S619 and S622. T653 carries the phosphothreonine; by MAPK1 or MAPK3 modification. Residues 659–679 form a disordered region; the sequence is LPVETDSGGNTSPGVTANGEA. Residues S665, S670, S685, and S756 each carry the phosphoserine modification. A compositionally biased stretch (basic and acidic residues) spans 742 to 761; sequence PEGPERREKLTRANSRDGEA. Positions 742–770 are disordered; sequence PEGPERREKLTRANSRDGEAGRAGAAPVA. A coiled-coil region spans residues 772-841; sequence EKQATELALL…RQLAALGHTE (70 aa). S860 carries the phosphoserine; by PAK1 and AURKA modification. Positions 867 to 961 are disordered; the sequence is LYLSFTPPQP…RDGEPVASES (95 aa). A Phosphotyrosine modification is found at Y868. A Phosphoserine; by PAK4 modification is found at S870. Residues 894–913 are compositionally biased toward basic and acidic residues; sequence RPFEDRERQELGSPDERLQD. Phosphoserine is present on residues S906, S914, and S915. Residues 915–925 show a composition bias toward acidic residues; that stretch reads SDPDTGSEEEG. Position 919 is a phosphothreonine (T919). Residues S921, S927, S928, and S931 each carry the phosphoserine modification. S935 carries the post-translational modification Phosphoserine; by CDK1.

As to quaternary structure, found in a complex composed at least of ARHGEF2, NOD2 and RIPK2. Interacts with RIPK2; the interaction mediates tyrosine phosphorylation of RIPK2 by Src kinase CSK. Interacts with RIPK1 and RIPK3. Interacts with YWHAZ/14-3-3 zeta; when phosphorylated at Ser-860. Interacts with the kinases PAK4, AURKA and MAPK1. Interacts with RHOA and RAC1. Interacts with NOD1. Interacts (via the N- terminal zinc finger) with CAPN6 (via domain II). Interacts with DYNLT1. Phosphorylation of Ser-860 by PAK1 induces binding to protein YWHAZ, promoting its relocation to microtubules and the inhibition of its activity. Phosphorylated by AURKA and CDK1 during mitosis, which negatively regulates its activity. Phosphorylation by MAPK1 or MAPK3 increases nucleotide exchange activity. Phosphorylation by PAK4 releases GEF-H1 from the microtubules. Phosphorylated on serine, threonine and tyrosine residues in a RIPK2-dependent manner.

Its subcellular location is the cytoplasm. It is found in the cytoskeleton. It localises to the cell junction. The protein resides in the tight junction. The protein localises to the golgi apparatus. Its subcellular location is the spindle. It is found in the cytoplasmic vesicle. Its function is as follows. Activates Rho-GTPases by promoting the exchange of GDP for GTP. May be involved in epithelial barrier permeability, cell motility and polarization, dendritic spine morphology, antigen presentation, leukemic cell differentiation, cell cycle regulation, innate immune response, and cancer. Binds Rac-GTPases, but does not seem to promote nucleotide exchange activity toward Rac-GTPases. May stimulate instead the cortical activity of Rac. Inactive toward CDC42, TC10, or Ras-GTPases. Forms an intracellular sensing system along with NOD1 for the detection of microbial effectors during cell invasion by pathogens. Involved in innate immune signaling transduction pathway promoting cytokine IL6/interleukin-6 and TNF-alpha secretion in macrophage upon stimulation by bacterial peptidoglycans; acts as a signaling intermediate between NOD2 receptor and RIPK2 kinase. Contributes to the tyrosine phosphorylation of RIPK2 through Src tyrosine kinase leading to NF-kappaB activation by NOD2. Overexpression activates Rho-, but not Rac-GTPases, and increases paracellular permeability. Involved in neuronal progenitor cell division and differentiation. Involved in the migration of precerebellar neurons. This Sus scrofa (Pig) protein is Rho guanine nucleotide exchange factor 2 (ARHGEF2).